Consider the following 356-residue polypeptide: Glutamine synthetase N-1 (356 aa).

The region spanning 19–99 (VIAEYIWVGG…VMCDAYTPAG (81 aa)) is the GS beta-grasp domain. A GS catalytic domain is found at 106-356 (KRHNAAKIFS…IAETTLLWKP (251 aa)).

It belongs to the glutamine synthetase family. As to quaternary structure, homooctamer. In terms of tissue distribution, this is a nodule isozyme.

It localises to the cytoplasm. The catalysed reaction is L-glutamate + NH4(+) + ATP = L-glutamine + ADP + phosphate + H(+). The polypeptide is Glutamine synthetase N-1 (Gln-gamma) (Phaseolus vulgaris (Kidney bean)).